We begin with the raw amino-acid sequence, 250 residues long: Small ribosomal subunit protein uS3 (250 aa).

One can recognise a KH type-2 domain in the interval 39–111 (IRQLINNFSK…DINLNILEVK (73 aa)).

The protein belongs to the universal ribosomal protein uS3 family. As to quaternary structure, part of the 30S ribosomal subunit. Forms a tight complex with proteins S10 and S14.

Functionally, binds the lower part of the 30S subunit head. Binds mRNA in the 70S ribosome, positioning it for translation. The polypeptide is Small ribosomal subunit protein uS3 (Phytoplasma australiense).